The chain runs to 1047 residues: MASPTSTNPAHDHFETFVQAQLCQDVLSSFQGLCRALGVESGGGLPQYHKIKAQLNYWSAKSLWAKLDKRASQPAYQQGQACTNTKCLVVGAGPCGLRAAVELALLGARVVLVEKRTKFSRHNVLHLWPFTIHDLRALGAKKFYGRFCTGTLDHISIRQLQLLLLKVALLLGVEIHWGFTFTGLQPPPKKGSGWRARIQPSPPAQLASYEFDVLISAGGGKFVPEGFTIREMRGKLAIGITANFVNGRTVEETQVPEISGVARIYNQKFFQSLLKATGIDLENIVYYKDDTHYFVMTAKKQCLLRLGVLRQDLPETDQLLGKANVVPEALQQFARAAADFATQGKLGKLEFAQDARGRPDVAAFDFTSMMRSESSARIQEKHGARLLLGLVGDCLVEPFWPLGTGVARGFLAAFDAAWMVKRWAEGTGPLELLAERESLYQLLSQTSPENMHRNVAQYGLDPATRYPNLNLRAVTPNQVQDLYDIMDKEHARKKSDETDARKTTTGSAGTEELLHWCQEQTAGFPGVSVTDFSSSWADGRALCALVHRLQPGLLEPSELQGMSALEATAWALRVAEYELGIIPVLSAQAVVAGSDPLGLIAYLSHFHSAFKNTPHSSGLVSQPHGTPSAILFLGKLQRSLQRTRTKVEEETPCTEEPPVSEPSVPPALPSEHEEAGAEDVCELCGKRLYILERFCVDGHFFHRGCFCCRTCEATLRPGGYGQYPGDGYFYCLQHLPQEDQKEADNNGSPENQELPTPGDSTTQSGPSSPVPPVTEASPVPSPSQPARRLIRLSSVERLRLSSLNIIPDSGVEPPPKPPRSCLDLAQESLKSSFMGWGVLRAPQVPEAIEKGEEEEEEEEEEEEEEEELPPPLALEVEQSLLTLAKNSGDMTKYPTWRRTLMRRAKEEEMKRFCKAQAIQRRLNEIEAAMRELETEGMKLEVALRKESSSPEKQKKLWLEQLLQLIQKKNSLVTEEAELMITVQELDLEEKQRQLDHEFRGINREETLKTQADRLSEDRVLRKLLDVVNQRDALIQFQEERRLREMPV.

The tract at residues 1–489 (MASPTSTNPA…QDLYDIMDKE (489 aa)) is monooxygenase domain. FAD is bound by residues cysteine 95, 114-116 (EKR), 121-123 (RHN), phenylalanine 181, tyrosine 293, and aspartate 393. Threonine 475 is modified (phosphothreonine). The region spanning 507–611 (SAGTEELLHW…YLSHFHSAFK (105 aa)) is the Calponin-homology (CH) domain. Serine 616 is subject to Phosphoserine. The segment at 644–672 (RTKVEEETPCTEEPPVSEPSVPPALPSEH) is disordered. Residues 659–668 (VSEPSVPPAL) show a composition bias toward pro residues. In terms of domain architecture, LIM zinc-binding spans 679-741 (DVCELCGKRL…LQHLPQEDQK (63 aa)). Cysteine 681, cysteine 684, histidine 702, cysteine 705, cysteine 708, cysteine 711, cysteine 731, and histidine 734 together coordinate Zn(2+). Disordered stretches follow at residues 739 to 787 (DQKE…QPAR) and 849 to 872 (EKGEEEEEEEEEEEEEEEELPPPL). The segment covering 745–767 (NNGSPENQELPTPGDSTTQSGPS) has biased composition (polar residues). Phosphoserine is present on residues serine 777 and serine 781. The segment covering 851–868 (GEEEEEEEEEEEEEEEEL) has biased composition (acidic residues). Residues 905–1047 (KEEEMKRFCK…EERRLREMPV (143 aa)) enclose the bMERB domain. Residues 912-996 (FCKAQAIQRR…LEEKQRQLDH (85 aa)) adopt a coiled-coil conformation.

Belongs to the Mical family. Interacts with STK38 and STK38L. Associates with the SH3 domain of NEDD9. Interacts with VIM and PLXNA3. Interacts with RAB1B, RAB8A, RAB10, RAB13 and RAB15 (in their GTP-bound forms); binding to RAB1B is of low affinity compared to other Rab proteins; at least in case of RAB8A and RAB10 can bind 2 molecules of the Rab proteins simultaneously. Interacts with GRAF1/ARHGAP26, GRAF2/ARHGAP10, RAB8A, RAB8B and RAB10; may bind simultaneously to GRAFs and Rabs and connects GRAFs to Rabs. Does not interact with RAB1 and RAB11A. FAD serves as cofactor.

It is found in the cytoplasm. It localises to the cytoskeleton. The protein localises to the endosome membrane. The protein resides in the midbody. The catalysed reaction is L-methionyl-[F-actin] + NADPH + O2 + H(+) = L-methionyl-(R)-S-oxide-[F-actin] + NADP(+) + H2O. The enzyme catalyses NADPH + O2 + H(+) = H2O2 + NADP(+). Functionally, monooxygenase that promotes depolymerization of F-actin by mediating oxidation of specific methionine residues on actin to form methionine-sulfoxide, resulting in actin filament disassembly and preventing repolymerization. In the absence of actin, it also functions as a NADPH oxidase producing H(2)O(2). Acts as a cytoskeletal regulator that connects NEDD9 to intermediate filaments. Also acts as a negative regulator of apoptosis via its interaction with STK38 and STK38L; acts by antagonizing STK38 and STK38L activation by MST1/STK4. Involved in regulation of lamina-specific connectivity in the nervous system such as the development of lamina-restricted hippocampal connections. Through redox regulation of the actin cytoskeleton controls the intracellular distribution of secretory vesicles containing L1/neurofascin/NgCAM family proteins in neurons, thereby regulating their cell surface levels. May act as Rab effector protein and play a role in vesicle trafficking. Promotes endosomal tubule extension by associating with RAB8 (RAB8A or RAB8B), RAB10 and GRAF (GRAF1/ARHGAP26 or GRAF2/ARHGAP10) on the endosomal membrane which may connect GRAFs to Rabs, thereby participating in neosynthesized Rab8-Rab10-Rab11-dependent protein export. The chain is [F-actin]-monooxygenase MICAL1 (Mical1) from Rattus norvegicus (Rat).